Reading from the N-terminus, the 91-residue chain is Early E3B 10.4 kDa protein (91 aa).

The first 22 residues, 1 to 22 (MIPRVFILLTLVALFCACSTLA), serve as a signal peptide directing secretion. The Lumenal segment spans residues 23-34 (AVSHIEVDCIPA). The chain crosses the membrane as a helical span at residues 35–60 (FTVYLLYGFVTLTLICSLITVVIAFI). Topologically, residues 61-91 (QCIDWVCVRFAYLRHHPQYRDRTIAELLRIL) are cytoplasmic.

This sequence belongs to the adenoviridae E3B family.

The protein resides in the host endoplasmic reticulum membrane. Functionally, down-regulates the EGF receptor. This is Early E3B 10.4 kDa protein from Homo sapiens (Human).